The primary structure comprises 823 residues: Lon protease (823 aa).

Positions 22 to 217 (LPLLPVRDVV…KVNEHLNKEH (196 aa)) constitute a Lon N-terminal domain. 369-376 (GPPGVGKT) is an ATP binding site. Residues 605-786 (KNEVGIVTGL…DDVLAVALET (182 aa)) enclose the Lon proteolytic domain. Catalysis depends on residues serine 692 and lysine 735. The interval 788 to 823 (PPPPPASEGKPAATVKAPPRRGIAAPRKGAMAGAKS) is disordered.

Belongs to the peptidase S16 family. Homohexamer. Organized in a ring with a central cavity.

The protein resides in the cytoplasm. It carries out the reaction Hydrolysis of proteins in presence of ATP.. ATP-dependent serine protease that mediates the selective degradation of mutant and abnormal proteins as well as certain short-lived regulatory proteins. Required for cellular homeostasis and for survival from DNA damage and developmental changes induced by stress. Degrades polypeptides processively to yield small peptide fragments that are 5 to 10 amino acids long. Binds to DNA in a double-stranded, site-specific manner. The polypeptide is Lon protease (Geobacter metallireducens (strain ATCC 53774 / DSM 7210 / GS-15)).